Consider the following 421-residue polypeptide: MVETLESIISFIVVFGALVFFHELGHLLLAKRAGILCREFAIGFGPKVFSFKKNETVYTIRLLPLGGFVRMAGEDPETIELKRGQVVGLLLDESGQVEKIVLNHKDDYPNIRVVEVEEADLEHGMYVTGYTDGERFERFTVKEPAFFVVDRQEIQIAPYHRQFAAKTLGQRTMTILAGPLANFLLSLVVFIIIGLLQGYPVDKPVIGELTPEGAARAAGLKQGDKVIAINGERMETWTEIVNTIRAHPGEPLQFQIERNGKERSVTVTPEAKTVQGETIGLIGVYQPMEKSVLGSIKQGLVETYYWTREIVTGLGQLITGQFQLDMLSGPVGIAVSTGKVAESGIYYLMKWGAILSINLGIVNLLPLPALDGGRLLFFAIEAVRGKPVDRQKEGMVHFIGFALLMLLMLVVTWNDIQKFFL.

The next 4 helical transmembrane spans lie at 8 to 28, 175 to 195, 345 to 365, and 393 to 413; these read IISF…GHLL, ILAG…IIGL, IYYL…VNLL, and EGMV…VVTW. His-22 lines the Zn(2+) pocket. The active site involves Glu-23. Residue His-26 participates in Zn(2+) binding. Residues 186 to 271 enclose the PDZ domain; it reads SLVVFIIIGL…ERSVTVTPEA (86 aa).

The protein belongs to the peptidase M50B family. It depends on Zn(2+) as a cofactor.

The protein localises to the cell membrane. Is responsible for Site-2 cleavage of the RsiW anti-sigma factor. This results, after a third proteolytic step catalyzed by the ClpXP protease, in the release of SigW and the transcription activation of the genes under the control of the sigma-W factor. This is Zinc metalloprotease RasP (rasP) from Geobacillus kaustophilus (strain HTA426).